We begin with the raw amino-acid sequence, 90 residues long: DNA-directed RNA polymerase subunit omega (90 aa).

It belongs to the RNA polymerase subunit omega family. As to quaternary structure, the RNAP catalytic core consists of 2 alpha, 1 beta, 1 beta' and 1 omega subunit. When a sigma factor is associated with the core the holoenzyme is formed, which can initiate transcription.

It catalyses the reaction RNA(n) + a ribonucleoside 5'-triphosphate = RNA(n+1) + diphosphate. Promotes RNA polymerase assembly. Latches the N- and C-terminal regions of the beta' subunit thereby facilitating its interaction with the beta and alpha subunits. This is DNA-directed RNA polymerase subunit omega from Beutenbergia cavernae (strain ATCC BAA-8 / DSM 12333 / CCUG 43141 / JCM 11478 / NBRC 16432 / NCIMB 13614 / HKI 0122).